Here is a 26-residue protein sequence, read N- to C-terminus: MAWKTPRYDETPVGMEINMYACAKRK.

A cross-link (pyrroloquinoline quinone (Glu-Tyr)) is located at residues 16–20; it reads EINMY.

The protein belongs to the PqqA family.

The protein operates within cofactor biosynthesis; pyrroloquinoline quinone biosynthesis. Functionally, required for coenzyme pyrroloquinoline quinone (PQQ) biosynthesis. PQQ is probably formed by cross-linking a specific glutamate to a specific tyrosine residue and excising these residues from the peptide. The chain is Coenzyme PQQ synthesis protein A from Cereibacter sphaeroides (strain ATCC 17029 / ATH 2.4.9) (Rhodobacter sphaeroides).